Reading from the N-terminus, the 233-residue chain is Small ribosomal subunit protein uS7m (233 aa).

A mitochondrion-targeting transit peptide spans 1-28 (MAAPTAAGLCPRLRAWLPRLTQVRWSRY).

The protein belongs to the universal ribosomal protein uS7 family. In terms of assembly, component of the mitochondrial ribosome small subunit (28S) which comprises a 12S rRNA and about 30 distinct proteins.

The protein resides in the mitochondrion. In Gallus gallus (Chicken), this protein is Small ribosomal subunit protein uS7m (MRPS7).